The primary structure comprises 272 residues: Alpha-tubulin N-acetyltransferase (272 aa).

The 186-residue stretch at 1-186 (MEFRFNCHPL…NNFVVYEGFF (186 aa)) folds into the N-acetyltransferase domain. Acetyl-CoA contacts are provided by residues 120–133 (FYVHESRQRGGLGR) and 156–165 (SEKLLGFLQK). The tract at residues 216–244 (TTVGEQRRSSSQTRQQVVSPPVVQQPPVG) is disordered. Over residues 224-244 (SSSQTRQQVVSPPVVQQPPVG) the composition is skewed to low complexity.

Belongs to the acetyltransferase ATAT1 family.

It carries out the reaction L-lysyl-[alpha-tubulin] + acetyl-CoA = N(6)-acetyl-L-lysyl-[alpha-tubulin] + CoA + H(+). Specifically acetylates 'Lys-40' in alpha-tubulin on the lumenal side of microtubules. Promotes microtubule destabilization and accelerates microtubule dynamics; this activity may be independent of acetylation activity. Acetylates alpha-tubulin with a slow enzymatic rate, due to a catalytic site that is not optimized for acetyl transfer. Enters the microtubule through each end and diffuses quickly throughout the lumen of microtubules. Acetylates only long/old microtubules because of its slow acetylation rate since it does not have time to act on dynamically unstable microtubules before the enzyme is released. The chain is Alpha-tubulin N-acetyltransferase from Aedes aegypti (Yellowfever mosquito).